The chain runs to 240 residues: tRNA (guanine-N(1)-)-methyltransferase (240 aa).

S-adenosyl-L-methionine is bound by residues G110 and 129 to 134 (LGDFVL).

The protein belongs to the RNA methyltransferase TrmD family. In terms of assembly, homodimer.

The protein resides in the cytoplasm. It catalyses the reaction guanosine(37) in tRNA + S-adenosyl-L-methionine = N(1)-methylguanosine(37) in tRNA + S-adenosyl-L-homocysteine + H(+). Its function is as follows. Specifically methylates guanosine-37 in various tRNAs. This is tRNA (guanine-N(1)-)-methyltransferase from Clostridium botulinum (strain Kyoto / Type A2).